We begin with the raw amino-acid sequence, 476 residues long: Protein transport protein Sec61 subunit alpha isoform 1 (476 aa).

Residues 2–28 (AIKFLEVIKPFCVILPEIQKPERKIQF) lie on the Cytoplasmic side of the membrane. Residues 29 to 46 (KEKVLWTAITLFIFLVCC) traverse the membrane as a helical segment. Topologically, residues 47–80 (QIPLFGIMSSDSADPFYWMRVILASNRGTLMELG) are lumenal. A helical transmembrane segment spans residues 81-97 (ISPIVTSGLIMQLLAGA). At 98-109 (KIIEVGDTPKDR) the chain is on the cytoplasmic side. Residues 110–131 (ALFNGAQKLFGMIITIGQSIVY) form a helical membrane-spanning segment. Topologically, residues 132-148 (VMTGMYGDPSEMGAGIC) are lumenal. Residues 149 to 167 (LLITIQLFVAGLIVLLLDE) traverse the membrane as a helical segment. Residues 168–177 (LLQKGYGLGS) lie on the Cytoplasmic side of the membrane. The helical transmembrane segment at 178–196 (GISLFIATNICETIVWKAF) threads the bilayer. The Lumenal segment spans residues 197-241 (SPTTVNTGRGMEFEGAIIALFHLLATRTDKVRALREAFYRQNLPN). Residues 242 to 259 (LMNLIATIFVFAVVIYFQ) traverse the membrane as a helical segment. Topologically, residues 260 to 285 (GFRVDLPIKSARYRGQYNTYPIKLFY) are cytoplasmic. Residues 286 to 306 (TSNIPIILQSALVSNLYVISQ) traverse the membrane as a helical segment. The Lumenal segment spans residues 307–356 (MLSARFSGNLLVSLLGTWSDTSSGGPARAYPVGGLCHYLSPPESFGSVLE). A helical membrane pass occupies residues 357–379 (DPVHAVVYIVFMLGSCAFFSKTW). The Cytoplasmic segment spans residues 380-420 (IEVSGSSAKDVAKQLKEQQMVMRGHRETSMVHELNRYIPTA). The helical transmembrane segment at 421–437 (AAFGGLCIGALSVLADF) threads the bilayer. At 438–443 (LGAIGS) the chain is on the lumenal side. Residues 444–458 (GTGILLAVTIIYQYF) form a helical membrane-spanning segment. The Cytoplasmic portion of the chain corresponds to 459-476 (EIFVKEQSEVGSMGALLF).

This sequence belongs to the SecY/SEC61-alpha family. In terms of assembly, the SEC61 channel-forming translocon complex consists of channel-forming core components SEC61A1, SEC61B and SEC61G and different auxiliary components such as SEC62 and SEC63. The SEC61 channel associates with the multi-pass translocon (MPT) complex.

It is found in the endoplasmic reticulum membrane. Its function is as follows. Component of SEC61 channel-forming translocon complex that mediates transport of signal peptide-containing precursor polypeptides across the endoplasmic reticulum (ER). Forms a ribosome receptor and a gated pore in the ER membrane, both functions required for cotranslational translocation of nascent polypeptides. May cooperate with auxiliary protein SEC62, SEC63 and HSPA5/BiP to enable post-translational transport of small presecretory proteins. The SEC61 channel is also involved in ER membrane insertion of transmembrane proteins: it mediates membrane insertion of the first few transmembrane segments of proteins, while insertion of subsequent transmembrane regions of multi-pass membrane proteins is mediated by the multi-pass translocon (MPT) complex. The SEC61 channel cooperates with the translocating protein TRAM1 to import nascent proteins into the ER. Controls the passive efflux of calcium ions from the ER lumen to the cytosol through SEC61 channel, contributing to the maintenance of cellular calcium homeostasis. Plays a critical role in nephrogenesis, specifically at pronephros stage. The polypeptide is Protein transport protein Sec61 subunit alpha isoform 1 (SEC61A1) (Canis lupus familiaris (Dog)).